The following is a 213-amino-acid chain: Orotate phosphoribosyltransferase (213 aa).

A 5-phospho-alpha-D-ribose 1-diphosphate-binding site is contributed by lysine 26. Orotate is bound at residue 34 to 35 (FF). 5-phospho-alpha-D-ribose 1-diphosphate is bound by residues 72–73 (YK), arginine 98, lysine 99, lysine 102, histidine 104, and 123–131 (DDVISAGTS). Residues serine 127 and arginine 155 each contribute to the orotate site.

This sequence belongs to the purine/pyrimidine phosphoribosyltransferase family. PyrE subfamily. As to quaternary structure, homodimer. It depends on Mg(2+) as a cofactor.

It catalyses the reaction orotidine 5'-phosphate + diphosphate = orotate + 5-phospho-alpha-D-ribose 1-diphosphate. It participates in pyrimidine metabolism; UMP biosynthesis via de novo pathway; UMP from orotate: step 1/2. Its function is as follows. Catalyzes the transfer of a ribosyl phosphate group from 5-phosphoribose 1-diphosphate to orotate, leading to the formation of orotidine monophosphate (OMP). The chain is Orotate phosphoribosyltransferase from Laribacter hongkongensis (strain HLHK9).